The primary structure comprises 302 residues: Nodulation protein D 3 (302 aa).

Residues 6-63 enclose the HTH lysR-type domain; it reads LDLNLLVALDALMIERNLTAAARSINLSQPAMSAAVRRLRSYFRDELFTMRGREFVPT. The segment at residues 23–42 is a DNA-binding region (H-T-H motif); that stretch reads LTAAARSINLSQPAMSAAVR.

Belongs to the LysR transcriptional regulatory family.

Functionally, nodD regulates the expression of the nodABCFE genes which encode other nodulation proteins. NodD is also a negative regulator of its own expression. Binds flavonoids as inducers. This Rhizobium leguminosarum bv. phaseoli protein is Nodulation protein D 3 (nodD3).